The chain runs to 374 residues: MSDNSQKKVIVGMSGGVDSSVSAYLLKQQGYQVEGLFMKNWEEDDDSEYCTAAEDLADAQAVCDKLGIHLHKINFAAEYWDNVFEYFLSEYKAGRTPNPDILCNKEIKFKAFLEFADEVLDADYIAMGHYVRRSFPENGEKPQMLRGLDGNKDQSYFLYTLSHEQVARSLFPVGELEKPEVRRIAEEQGLITAKKKDSTGICFIGERKFTDFLSRYLPAQPGNIESPEGEVLGQHQGLMYHTLGQRKGLHIGGRKGGGGNEEPWFVAEKDLKRNVLIAVQGQDHPMLKSEGLIASQLHWVEREPIRDVMKCTVKTRYRQQDIPCTIIPIDDENIKVIFDEPEIAVTPGQSAVFYQGDVCLGGGIIEKRIKYTQA.

ATP contacts are provided by residues G12 to S19 and M38. Positions N98–D100 are interaction with target base in tRNA. Catalysis depends on C103, which acts as the Nucleophile. C103 and C202 are disulfide-bonded. G128 lines the ATP pocket. Residues K152–Q154 are interaction with tRNA. The Cysteine persulfide intermediate role is filled by C202. The interval R316–Y317 is interaction with tRNA.

Belongs to the MnmA/TRMU family.

Its subcellular location is the cytoplasm. It catalyses the reaction S-sulfanyl-L-cysteinyl-[protein] + uridine(34) in tRNA + AH2 + ATP = 2-thiouridine(34) in tRNA + L-cysteinyl-[protein] + A + AMP + diphosphate + H(+). In terms of biological role, catalyzes the 2-thiolation of uridine at the wobble position (U34) of tRNA, leading to the formation of s(2)U34. The sequence is that of tRNA-specific 2-thiouridylase MnmA from Vibrio vulnificus (strain YJ016).